The primary structure comprises 258 residues: Dehydrodolichyl diphosphate synthase complex subunit nus1 (258 aa).

A helical membrane pass occupies residues 5–21 (IFFYLALWVIQSVYGAW).

Belongs to the UPP synthase family. As to quaternary structure, forms an active dehydrodolichyl diphosphate synthase complex with SPAC4D7.04c. Requires Mg(2+) as cofactor.

Its subcellular location is the endoplasmic reticulum membrane. The catalysed reaction is n isopentenyl diphosphate + (2E,6E)-farnesyl diphosphate = a di-trans,poly-cis-polyprenyl diphosphate + n diphosphate. It participates in protein modification; protein glycosylation. With SPAC4D7.04c, forms the dehydrodolichyl diphosphate synthase (DDS) complex, an essential component of the dolichol monophosphate (Dol-P) biosynthetic machinery. Adds multiple copies of isopentenyl pyrophosphate (IPP) to farnesyl pyrophosphate (FPP) to produce dehydrodolichyl diphosphate (Dedol-PP), a precursor of dolichol which is utilized as a sugar carrier in protein glycosylation in the endoplasmic reticulum (ER). The sequence is that of Dehydrodolichyl diphosphate synthase complex subunit nus1 (nus1) from Schizosaccharomyces pombe (strain 972 / ATCC 24843) (Fission yeast).